Reading from the N-terminus, the 235-residue chain is Small ribosomal subunit protein eS4 (235 aa).

One can recognise an S4 RNA-binding domain in the interval Val-38–Asn-99.

This sequence belongs to the eukaryotic ribosomal protein eS4 family.

This is Small ribosomal subunit protein eS4 (rps4e) from Thermoplasma volcanium (strain ATCC 51530 / DSM 4299 / JCM 9571 / NBRC 15438 / GSS1).